We begin with the raw amino-acid sequence, 374 residues long: Anhydro-N-acetylmuramic acid kinase (374 aa).

An ATP-binding site is contributed by 12 to 19; it reads GTSLDGVD.

The protein belongs to the anhydro-N-acetylmuramic acid kinase family.

The enzyme catalyses 1,6-anhydro-N-acetyl-beta-muramate + ATP + H2O = N-acetyl-D-muramate 6-phosphate + ADP + H(+). It participates in amino-sugar metabolism; 1,6-anhydro-N-acetylmuramate degradation. The protein operates within cell wall biogenesis; peptidoglycan recycling. Catalyzes the specific phosphorylation of 1,6-anhydro-N-acetylmuramic acid (anhMurNAc) with the simultaneous cleavage of the 1,6-anhydro ring, generating MurNAc-6-P. Is required for the utilization of anhMurNAc either imported from the medium or derived from its own cell wall murein, and thus plays a role in cell wall recycling. This chain is Anhydro-N-acetylmuramic acid kinase, found in Salmonella arizonae (strain ATCC BAA-731 / CDC346-86 / RSK2980).